A 423-amino-acid chain; its full sequence is Gamma-glutamyl phosphate reductase (423 aa).

The protein belongs to the gamma-glutamyl phosphate reductase family.

The protein localises to the cytoplasm. The enzyme catalyses L-glutamate 5-semialdehyde + phosphate + NADP(+) = L-glutamyl 5-phosphate + NADPH + H(+). Its pathway is amino-acid biosynthesis; L-proline biosynthesis; L-glutamate 5-semialdehyde from L-glutamate: step 2/2. Catalyzes the NADPH-dependent reduction of L-glutamate 5-phosphate into L-glutamate 5-semialdehyde and phosphate. The product spontaneously undergoes cyclization to form 1-pyrroline-5-carboxylate. The chain is Gamma-glutamyl phosphate reductase from Pseudomonas entomophila (strain L48).